The following is a 652-amino-acid chain: MKKRIKELTDLLNRYRYDYYTKDAPSVSDSDYDKLYRELVTLEQSYPEYVLQDSPTQQVGGTILKGFEKYRHQYPLFSLQDAFSREELDAFDKRVKAEFPNATYLAELKIDGLSISLSYENGFLQVGATRGDGNIGENITENIKKIKDIPHQLSEPLTITVRGEAYMSRQSFKAINEARQENGETEFANPRNAAAGTLRQLDTSVVAKRQLATFLYQEASPTARNQQNEVLAELAGLGFSVNPYYQLTSSMDEIWDFIKTIEAKRDQLAYDIDGVVIKVNSLAMQEELGFTVKAPRWAIAYKFPAEEKEAEILSVDWTVGRTGVVTPTANLTPVQLAGTTVSRATLHNVDYIAEKDIRIGDTVIVYKAGDIIPAVLNVVMSKRNQQEVMLIPKLCPSCGSELVHFEDEVALRCINPLCPSLIQRSLEHFASRDAMNITGLGPAIVEKLFLAGFVHDVADIYQLTKENFMQLDGIKEKSADKLLAAIEASKSNSAEKLLFGLGIRHIGSKVSRLILEVYGDISALLTAKEEEIARIDGLGSTIAQSLTQYFEQKTAAILVDELKTAGVNMHYSGQKVNSDAALFGLTVVLTGKLNQLNRNEAKDKLEALGAKVTGSVSKKTDLVIAGSDAGSKLEKAKSLGIRIEDEDWLRQL.

NAD(+)-binding positions include 29-33, 78-79, and glutamate 107; these read DSDYD and SL. The active-site N6-AMP-lysine intermediate is the lysine 109. 4 residues coordinate NAD(+): arginine 130, glutamate 164, lysine 278, and lysine 302. Residues cysteine 395, cysteine 398, cysteine 413, and cysteine 418 each contribute to the Zn(2+) site. One can recognise a BRCT domain in the interval 577-652; it reads NSDAALFGLT…IEDEDWLRQL (76 aa).

This sequence belongs to the NAD-dependent DNA ligase family. LigA subfamily. It depends on Mg(2+) as a cofactor. Mn(2+) serves as cofactor.

It catalyses the reaction NAD(+) + (deoxyribonucleotide)n-3'-hydroxyl + 5'-phospho-(deoxyribonucleotide)m = (deoxyribonucleotide)n+m + AMP + beta-nicotinamide D-nucleotide.. Functionally, DNA ligase that catalyzes the formation of phosphodiester linkages between 5'-phosphoryl and 3'-hydroxyl groups in double-stranded DNA using NAD as a coenzyme and as the energy source for the reaction. It is essential for DNA replication and repair of damaged DNA. In Streptococcus pyogenes serotype M12 (strain MGAS2096), this protein is DNA ligase.